A 266-amino-acid polypeptide reads, in one-letter code: Thymidylate synthase (266 aa).

Residue R24 participates in dUMP binding. H54 is a (6R)-5,10-methylene-5,6,7,8-tetrahydrofolate binding site. 129–130 (RR) is a binding site for dUMP. The Nucleophile role is filled by C149. DUMP contacts are provided by residues 169–172 (RSAD), N180, and 210–212 (HIY). Position 172 (D172) interacts with (6R)-5,10-methylene-5,6,7,8-tetrahydrofolate. (6R)-5,10-methylene-5,6,7,8-tetrahydrofolate is bound at residue A265.

It belongs to the thymidylate synthase family. Bacterial-type ThyA subfamily. In terms of assembly, homodimer.

It is found in the cytoplasm. The enzyme catalyses dUMP + (6R)-5,10-methylene-5,6,7,8-tetrahydrofolate = 7,8-dihydrofolate + dTMP. The protein operates within pyrimidine metabolism; dTTP biosynthesis. Catalyzes the reductive methylation of 2'-deoxyuridine-5'-monophosphate (dUMP) to 2'-deoxythymidine-5'-monophosphate (dTMP) while utilizing 5,10-methylenetetrahydrofolate (mTHF) as the methyl donor and reductant in the reaction, yielding dihydrofolate (DHF) as a by-product. This enzymatic reaction provides an intracellular de novo source of dTMP, an essential precursor for DNA biosynthesis. This is Thymidylate synthase from Nocardia farcinica (strain IFM 10152).